Here is a 448-residue protein sequence, read N- to C-terminus: Beclin-1 (448 aa).

N-acetylmethionine is present on Met1. Phosphoserine is present on residues Ser14 and Ser29. The disordered stretch occupies residues 47-66 (TTAQAKPGETQEEEANSGEE). Residues Ser88, Ser91, and Ser94 each carry the phosphoserine; by AMPK modification. The short motif at 106 to 125 (TMENLSRRLKVTGDLFDIMS) is the BH3 element. Positions 110–157 (LSRRLKVTGDLFDIMSGQTDVDHPLCEECTDTLLDQLDTQLNVTENEC) are interaction with BCL2 and BCL2L1 isoform Bcl-X(L). The residue at position 117 (Thr117) is a Phosphothreonine; by DAPK1. Residues 140–268 (DTLLDQLDTQ…LDKLKKTNVF (129 aa)) adopt a coiled-coil conformation. Residues 243–448 (DELKSVENQV…AWVSSQFYNK (206 aa)) are evolutionary conserved domain (ECD). Glycyl lysine isopeptide (Lys-Gly) (interchain with G-Cter in ubiquitin) cross-links involve residues Lys400 and Lys435. The tract at residues 423 to 448 (WTKALKFMLTNLKWGLAWVSSQFYNK) is required for membrane-association.

This sequence belongs to the beclin family. In terms of assembly, a homodimeric form is proposed to exist; this metastable form readily transits to ATG14- or UVRAG-containing complexes with BECN1:UVRAG being more stable than BECN1:ATG14. Component of the PI3K (PI3KC3/PI3K-III/class III phosphatidylinositol 3-kinase) complex whose core is composed of the catalytic subunit PIK3C3, the regulatory subunit PIK3R4 and BECN1, and associates with additional regulatory/auxiliary subunits to form alternative complex forms. Accepted alternative complex forms containing a fourth regulatory subunit in a mutually exclusive manner are PI3K complex I (PI3KC3-C1) containing ATG14, and PI3K complex II (PI3KC3-C2) containing UVRAG. PI3KC3-C1 displays a V-shaped architecture with PIK3R4 serving as a bridge between PIK3C3 and the ATG14:BECN1 subcomplex. Both, PI3KC3-C1 and PI3KC3-C2, can associate with further regulatory subunits, such as RUBCN, SH3GLB1/Bif-1 and AMBRA1. PI3KC3-C1 probably associates with PIK3CB. Forms a complex with PPP2CA and AMBRA1; AMBRA1 and BECN1 components of the complex regulate MYC stability via different pathways. Component of the complex, at least composed of LRPPRC, BECN1 and BCL2; the interactions prevent BECN1 from forming an autophagy-inducing complex with PIK3C3. Interacts with AMBRA1, GOPC, GRID2 and PIK3CB. Interacts with BCL2 and BCL2L1 isoform Bcl-X(L); the interaction inhibits BECN1 function in promoting autophagy by interfering with the formation of the PI3K complex. Interacts with cytosolic HMGB1; inhibits the interaction of BECN1 and BCL2 leading to promotion of autophagy. Interacts with USP10, USP13, VMP1, DAPK1. Interacts with the poly-Gln domain of ATXN3; the interaction causes deubiquitination at Lys-400 and stabilizes BECN1. Interacts with SLAMF1. Interacts with TRIM5; the interaction causes activation of BECN1 by causing its dissociation from its inhibitors BCL2 and TAB2. Interacts with active ULK1 (phosphorylated on 'Ser-317') and MEFV simultaneously. Interacts with TRIM50. Interacts with TRIM16. Interacts with WDR81 and WDR91; negatively regulates the PI3 kinase/PI3K activity associated with endosomal membranes. Interacts with LAPTM4B; competes with EGFR for LAPTM4B binding; regulates EGFR activity. Interacts with ATG14; this interaction is increased in the absence of TMEM39A. Interacts with WASHC1; preventing interaction with AMBRA1 and the DCX(AMBRA1) complex and subsequent ubiquitination. Interacts with TRIM17. Interacts with BCL2L10/BCL-B (via BH1 domain). Interacts with SH3BGRL. Interacts with Irgm1; enhancing BECN1-interacting partners and influencing the composition of the BECN1 complex. Interacts with ARMC3. Interacts with LRPPRC. As to quaternary structure, (Microbial infection) Interacts with murine gammaherpesvirus 68 M11; the viral protein binds BECN1 with higher affinity than cellular BCL2. Phosphorylation at Thr-117 by DAPK1 reduces its interaction with BCL2 and BCL2L1 and promotes induction of autophagy. In response to autophagic stimuli, phosphorylated at serine residues by AMPK in an ATG14-dependent manner, and this phosphorylation is critical for maximally efficient autophagy. In terms of processing, polyubiquitinated by NEDD4, both with 'Lys-11'- and 'Lys-63'-linkages. 'Lys-11'-linked polyubiquitination leads to degradation and is enhanced when the stabilizing interaction partner VPS34 is depleted. Deubiquitinated by USP10 and USP13, leading to stabilize the PIK3C3/VPS34-containing complexes. Polyubiquitinated at Lys-400 with 'Lys-48'-linkages. 'Lys-48'-linked poyubiquitination of Lys-400 leads to degradation. Deubiquitinated by ATXN3, leading to stabilization. Ubiquitinated at Lys-435 via 'Lys-63'-linkage by the DCX(AMBRA1) complex, thereby increasing the association between BECN1 and PIK3C3 to promote PIK3C3 activity. 'Lys-48'-linked ubiquitination by RNF216 leads to proteasomal degradation and autophagy inhibition. Post-translationally, proteolytically processed by caspases including CASP8 and CASP3; the C-terminal fragments lack autophagy-inducing capacity and are proposed to induce apoptosis. Thus the cleavage is proposed to be an determinant to switch from autophagy to apoptosis pathways affecting cellular homeostasis including viral infections and survival of tumor cells.

The protein localises to the cytoplasm. It localises to the golgi apparatus. The protein resides in the trans-Golgi network membrane. Its subcellular location is the endosome membrane. It is found in the endoplasmic reticulum membrane. The protein localises to the mitochondrion membrane. It localises to the endosome. The protein resides in the cytoplasmic vesicle. Its subcellular location is the autophagosome. It is found in the mitochondrion. The protein localises to the nucleus. In terms of biological role, plays a central role in autophagy. Acts as a core subunit of different PI3K complex forms that mediate formation of phosphatidylinositol 3-phosphate and are believed to play a role in multiple membrane trafficking pathways: PI3KC3-C1 is involved in initiation of autophagosomes and PI3KC3-C2 in maturation of autophagosomes and endocytosis. Involved in regulation of degradative endocytic trafficking and required for the abscission step in cytokinesis, probably in the context of PI3KC3-C2. Essential for the formation of PI3KC3-C2 but not PI3KC3-C1 PI3K complex forms. Involved in endocytosis including endosome formation in neuronal cells. May play a role in antiviral host defense. Its function is as follows. Beclin-1-C 35 kDa localized to mitochondria can promote apoptosis; it induces the mitochondrial translocation of BAX and the release of proapoptotic factors. The polypeptide is Beclin-1 (Becn1) (Mus musculus (Mouse)).